We begin with the raw amino-acid sequence, 529 residues long: Cytochrome P450 monooxygenase acuD (529 aa).

The chain crosses the membrane as a helical span at residues 8–28; the sequence is FAVIAASAAAVAGVLFLIYAA. Asn-81 is a glycosylation site (N-linked (GlcNAc...) asparagine). Cys-449 contacts heme.

This sequence belongs to the cytochrome P450 family. It depends on heme as a cofactor.

The protein resides in the endoplasmic reticulum membrane. It carries out the reaction 3-hydroxybenzyl alcohol + reduced [NADPH--hemoprotein reductase] + O2 = gentisyl alcohol + oxidized [NADPH--hemoprotein reductase] + H2O + H(+). The protein operates within secondary metabolite biosynthesis. Functionally, cytochrome P450 monooxygenase; part of the gene cluster that mediates the biosynthesis of aculins. The pathway begins with the synthesis of 6-methylsalicylic acid by the polyketide synthase (PKS) acuA via condensation of acetate and malonate units. The 6-methylsalicylic acid decarboxylase acuB then catalyzes the decarboxylation of 6-methylsalicylic acid to yield m-cresol (also known as 3-methylphenol). These first reactions occur in the cytosol. The intermediate m-cresol is then transported into the endoplasmic reticulum where the cytochrome P450 monooxygenase acuC converts it to m-hydroxybenzyl alcohol, which is further converted to gentisyl alcohol by the cytochrome P450 monooxygenase acuD. Gentisyl alcohol is further oxidized by the oxidoreductase acuE that probably catalyzes hydroxylation of the aromatic ring. The aromatic system might then be opened by oxidation through a Baeyer-Villiger type of oxidation, which could be catalyzed by acuF, with the carboxylic acid at C-1 subsequently reduced to an aldehyde by acuG. Subsequently, a hemiacetal is formed, before the dehydrogenase acuH would reduce the double bond between C-4 and C-6. Finally, keto-enol tautomerism results in formation of aculinic acid, which exists as two diastereomers (both R/S configurations at C-1) by non-enzymatic hemiacetal formation. The carboxypeptidase acuI could be involved in the linking of aculinic acid to an aculene A moiety produced by the aculene biosynthesis cluster and which leads to the production of aculin A. AcuI may also be involved in the attachment of proline to aculinic acid to form epi-aculins A and B. The polypeptide is Cytochrome P450 monooxygenase acuD (Aspergillus aculeatus (strain ATCC 16872 / CBS 172.66 / WB 5094)).